The following is a 262-amino-acid chain: Small ribosomal subunit protein uS3 (262 aa).

A KH type-2 domain is found at 38–106; sequence LRKIIAKELE…KVKLNIQEIH (69 aa). Residues 211-262 form a disordered region; sequence KGQTQLPQPAVAAARPGLTVEEEERPQRKGGRGGRGANAGAARGGRGGRSRS. Positions 243 to 255 are enriched in gly residues; that stretch reads GGRGANAGAARGG.

This sequence belongs to the universal ribosomal protein uS3 family. As to quaternary structure, part of the 30S ribosomal subunit. Forms a tight complex with proteins S10 and S14.

Functionally, binds the lower part of the 30S subunit head. Binds mRNA in the 70S ribosome, positioning it for translation. The polypeptide is Small ribosomal subunit protein uS3 (Roseiflexus sp. (strain RS-1)).